The chain runs to 203 residues: Inosine triphosphate pyrophosphatase (203 aa).

10-15 provides a ligand contact to ITP; it reads TGNQNK. E40 lines the Mg(2+) pocket. ITP-binding positions include K52, 68-69, K85, 145-148, K168, and 173-174; these read DT, FGWD, and HR.

It belongs to the HAM1 NTPase family. As to quaternary structure, homodimer. Mg(2+) serves as cofactor. Requires Mn(2+) as cofactor.

The protein localises to the cytoplasm. The enzyme catalyses ITP + H2O = IMP + diphosphate + H(+). It catalyses the reaction dITP + H2O = dIMP + diphosphate + H(+). It carries out the reaction XTP + H2O = XMP + diphosphate + H(+). Functionally, pyrophosphatase that hydrolyzes non-canonical purine nucleotides such as inosine triphosphate (ITP), deoxyinosine triphosphate (dITP) or xanthosine 5'-triphosphate (XTP) to their respective monophosphate derivatives. The enzyme does not distinguish between the deoxy- and ribose forms. Probably excludes non-canonical purines from RNA and DNA precursor pools, thus preventing their incorporation into RNA and DNA and avoiding chromosomal lesions. The chain is Inosine triphosphate pyrophosphatase from Nematostella vectensis (Starlet sea anemone).